Reading from the N-terminus, the 312-residue chain is tRNA dimethylallyltransferase (312 aa).

13-20 provides a ligand contact to ATP; that stretch reads GPTAAGKT. 15 to 20 contributes to the substrate binding site; sequence TAAGKT. 3 interaction with substrate tRNA regions span residues 38-41, 162-166, and 244-249; these read DSAM, QRLLR, and RCVGYR.

Belongs to the IPP transferase family. As to quaternary structure, monomer. Requires Mg(2+) as cofactor.

The enzyme catalyses adenosine(37) in tRNA + dimethylallyl diphosphate = N(6)-dimethylallyladenosine(37) in tRNA + diphosphate. Its function is as follows. Catalyzes the transfer of a dimethylallyl group onto the adenine at position 37 in tRNAs that read codons beginning with uridine, leading to the formation of N6-(dimethylallyl)adenosine (i(6)A). In Chromohalobacter salexigens (strain ATCC BAA-138 / DSM 3043 / CIP 106854 / NCIMB 13768 / 1H11), this protein is tRNA dimethylallyltransferase.